The chain runs to 394 residues: S-adenosylmethionine synthase 1 (394 aa).

Position 11 (glutamate 11) interacts with Mg(2+). An ATP-binding site is contributed by histidine 17. Residue glutamate 45 participates in K(+) binding. Glutamate 58 and glutamine 101 together coordinate L-methionine. ATP contacts are provided by residues 169 to 171 (DGK), 237 to 240 (SGRF), aspartate 248, 254 to 255 (RK), alanine 271, lysine 275, and lysine 279. L-methionine is bound at residue aspartate 248. Lysine 279 provides a ligand contact to L-methionine.

It belongs to the AdoMet synthase family. In terms of assembly, homotetramer. Requires Mn(2+) as cofactor. It depends on Mg(2+) as a cofactor. Co(2+) is required as a cofactor. The cofactor is K(+).

It localises to the cytoplasm. It carries out the reaction L-methionine + ATP + H2O = S-adenosyl-L-methionine + phosphate + diphosphate. It participates in amino-acid biosynthesis; S-adenosyl-L-methionine biosynthesis; S-adenosyl-L-methionine from L-methionine: step 1/1. In terms of biological role, catalyzes the formation of S-adenosylmethionine from methionine and ATP. The reaction comprises two steps that are both catalyzed by the same enzyme: formation of S-adenosylmethionine (AdoMet) and triphosphate, and subsequent hydrolysis of the triphosphate. The polypeptide is S-adenosylmethionine synthase 1 (SAM1) (Hordeum vulgare (Barley)).